The sequence spans 846 residues: Iron-sulfur cluster assembly SufBD family protein Mb1496 (846 aa).

Positions 1–20 are disordered; the sequence is MTLTPEASKSVAQPPTQAPL. A DOD-type homing endonuclease domain is found at 388–528; it reads LAGYYLAEGH…LQSILARLGH (141 aa).

The protein belongs to the iron-sulfur cluster assembly SufBD family. This protein undergoes a protein self splicing that involves a post-translational excision of the intervening region (intein) followed by peptide ligation.

The sequence is that of Iron-sulfur cluster assembly SufBD family protein Mb1496 from Mycobacterium bovis (strain ATCC BAA-935 / AF2122/97).